Consider the following 453-residue polypeptide: Bifunctional protein GlmU (453 aa).

Residues 1 to 231 (MERTCLAVIL…EIEMTGCNNR (231 aa)) are pyrophosphorylase. UDP-N-acetyl-alpha-D-glucosamine is bound by residues 10-13 (LAAG), Lys-24, Gln-77, 82-83 (GT), 105-107 (YGD), Gly-143, Glu-157, Asn-172, and Asn-229. Residue Asp-107 coordinates Mg(2+). Asn-229 serves as a coordination point for Mg(2+). The segment at 232–252 (AELAVIERFWQERRRREMMLA) is linker. Residues 253 to 453 (GVTMIAPETV…AIKAAKRAKA (201 aa)) form an N-acetyltransferase region. 2 residues coordinate UDP-N-acetyl-alpha-D-glucosamine: Arg-318 and Lys-336. His-348 functions as the Proton acceptor in the catalytic mechanism. Residues Tyr-351 and Asn-362 each coordinate UDP-N-acetyl-alpha-D-glucosamine. Residues Ala-365, 371–372 (NY), Ser-390, Ser-408, and Arg-425 each bind acetyl-CoA.

This sequence in the N-terminal section; belongs to the N-acetylglucosamine-1-phosphate uridyltransferase family. The protein in the C-terminal section; belongs to the transferase hexapeptide repeat family. In terms of assembly, homotrimer. Mg(2+) serves as cofactor.

It is found in the cytoplasm. The enzyme catalyses alpha-D-glucosamine 1-phosphate + acetyl-CoA = N-acetyl-alpha-D-glucosamine 1-phosphate + CoA + H(+). It catalyses the reaction N-acetyl-alpha-D-glucosamine 1-phosphate + UTP + H(+) = UDP-N-acetyl-alpha-D-glucosamine + diphosphate. Its pathway is nucleotide-sugar biosynthesis; UDP-N-acetyl-alpha-D-glucosamine biosynthesis; N-acetyl-alpha-D-glucosamine 1-phosphate from alpha-D-glucosamine 6-phosphate (route II): step 2/2. The protein operates within nucleotide-sugar biosynthesis; UDP-N-acetyl-alpha-D-glucosamine biosynthesis; UDP-N-acetyl-alpha-D-glucosamine from N-acetyl-alpha-D-glucosamine 1-phosphate: step 1/1. It participates in bacterial outer membrane biogenesis; LPS lipid A biosynthesis. Functionally, catalyzes the last two sequential reactions in the de novo biosynthetic pathway for UDP-N-acetylglucosamine (UDP-GlcNAc). The C-terminal domain catalyzes the transfer of acetyl group from acetyl coenzyme A to glucosamine-1-phosphate (GlcN-1-P) to produce N-acetylglucosamine-1-phosphate (GlcNAc-1-P), which is converted into UDP-GlcNAc by the transfer of uridine 5-monophosphate (from uridine 5-triphosphate), a reaction catalyzed by the N-terminal domain. The chain is Bifunctional protein GlmU from Rhizobium etli (strain CIAT 652).